A 119-amino-acid chain; its full sequence is Protein Wnt-4 (119 aa).

S1 carries the O-palmitoleoyl serine; by PORCN lipid modification. Intrachain disulfides connect C69–C100 and C85–C95. N-linked (GlcNAc...) asparagine glycosylation occurs at N86.

Belongs to the Wnt family. Palmitoleoylation is required for efficient binding to frizzled receptors. Depalmitoleoylation leads to Wnt signaling pathway inhibition.

It is found in the secreted. It localises to the extracellular space. The protein localises to the extracellular matrix. Functionally, ligand for members of the frizzled family of seven transmembrane receptors. Plays an important role in embryonic development. This chain is Protein Wnt-4 (WNT-4), found in Plestiodon skiltonianus (Western skink).